The primary structure comprises 312 residues: 1-phosphofructokinase (312 aa).

Residues 223 to 228 and 254 to 255 contribute to the ATP site; these read SLGAEG and GD. The Proton acceptor role is filled by aspartate 255.

The protein belongs to the carbohydrate kinase PfkB family.

It carries out the reaction beta-D-fructose 1-phosphate + ATP = beta-D-fructose 1,6-bisphosphate + ADP + H(+). Its function is as follows. Catalyzes the ATP-dependent phosphorylation of fructose-l-phosphate to fructose-l,6-bisphosphate. This Escherichia coli O157:H7 protein is 1-phosphofructokinase (fruK).